We begin with the raw amino-acid sequence, 1166 residues long: Reverse gyrase 2 (1166 aa).

An RG N-terminal-type zinc finger spans residues 1 to 40 (MINVMYKNSCPNCGGDISGDRLLNGLPCEACLPYINGIDD). Zn(2+)-binding residues include Cys10, Cys13, Cys28, and Cys31. ATP-binding positions include Gln92 and 109-116 (APTGLGKT). The region spanning 96 to 285 (LRRLASNQSF…ALRLLTGFEP (190 aa)) is the Helicase ATP-binding domain. Positions 190-193 (DDAD) match the DEAD box motif. A topoisomerase I region spans residues 576–1166 (FNISTGLLIV…VNPLKSEQNV (591 aa)). In terms of domain architecture, Toprim spans 580–743 (TGLLIVESPT…NVYRVVYHEI (164 aa)). Residue Glu586 coordinates Mg(2+). An RG C-terminal-type zinc finger spans residues 662–689 (IKKCLDCNKIFSSASDKCPYCGSANLQS). Positions 665, 668, 679, and 682 each coordinate Zn(2+). Asp712 is a binding site for Mg(2+). Residues 759 to 1157 (NTNLVMSQIV…EIFSEISTLV (399 aa)) form the Topo IA-type catalytic domain. Catalysis depends on Tyr903, which acts as the O-(5'-phospho-DNA)-tyrosine intermediate.

This sequence in the N-terminal section; belongs to the DEAD box helicase family. DDVD subfamily. The protein in the C-terminal section; belongs to the type IA topoisomerase family. As to quaternary structure, monomer. It depends on Zn(2+) as a cofactor. Requires Mg(2+) as cofactor.

The protein resides in the cytoplasm. The catalysed reaction is ATP + H2O = ADP + phosphate + H(+). Its activity is regulated as follows. At least one of the 2 proteins is inhibited by actinomycin D. Less sensitive to NaCl than TopR1, maximal positive supercoiling is observed with 100 mM NaCl; as NaCl rises higher than 400 mM supercoiling decreases. At 600 mM NaCl relaxes but does not introduce positive supercoils into negatively supercoiled substrate. In terms of biological role, modifies the topological state of DNA by introducing positive supercoils in an ATP-dependent process. A highly processive enzyme, it introduces a large number of positive supercoils directly in a negatively supercoiled substrate. At 75 degrees Celsius introduces more than 23 positive supercoils into pTZ18R DNA (probably 2860 bp), more than TopR1; unlike TopR1 little to no relaxation of the negatively supercoiled substrate is seen in the presence of ATP, in the absence of ATP no activity is seen. At 45 degrees Celsius the enzyme is slower and in vitro individual steps can be detected. It cleaves transiently a single DNA strand and remains covalently bound to the 5' DNA end through a tyrosine residue. May be involved in DNA damage response. May be involved in rewinding the DNA strands in the regions of the chromosome that have opened up to allow transcription or replication. There are 2 genes for this protein in the cell. During exponential growth this is the more highly expressed isoform (about 125 molecules per cell at 80 degrees Celsius, about 117 molecules at 88 degrees Celsius); this isoform is less active at higher temperature. Grows actively at both 80 and 88 degrees Celsius; survives a long exposure at 45 degrees Celsius without DNA replication or cell division occurring. Experiments using whole cell extracts do not distinguish which isoform is present, the results are probably a mixture of the two forms. In Saccharolobus solfataricus (strain ATCC 35092 / DSM 1617 / JCM 11322 / P2) (Sulfolobus solfataricus), this protein is Reverse gyrase 2.